A 112-amino-acid polypeptide reads, in one-letter code: Mitochondrial import inner membrane translocase subunit TIM14-1 (112 aa).

N-acetylalanine is present on A2. A helical transmembrane segment spans residues A7 to Q23. Positions E53–F112 constitute a J domain.

The protein belongs to the TIM14 family. As to quaternary structure, probable component of the PAM complex at least composed of a mitochondrial HSP70 protein, TIMM44 and TIMM14. The complex interacts with the TIMM23 component of the TIM17:23 complex.

The protein localises to the mitochondrion. Its subcellular location is the mitochondrion inner membrane. Component of the PAM complex, a complex required for the translocation of transit peptide-containing proteins from the inner membrane into the mitochondrial matrix in an ATP-dependent manner. This is Mitochondrial import inner membrane translocase subunit TIM14-1 (TIM14-1) from Arabidopsis thaliana (Mouse-ear cress).